The primary structure comprises 33 residues: ETLSSARFRCKPNSEWRTQIPLFPQEVEACVLS.

In terms of assembly, the polymerase complex is composed of four chains, the three other proteins of the complex (alpha, gamma, and delta chains) are supplied by the host cell.

It carries out the reaction RNA(n) + a ribonucleoside 5'-triphosphate = RNA(n+1) + diphosphate. Functionally, this enzyme is part of the viral RNA-dependent RNA polymerase complex. The polypeptide is RNA-directed RNA polymerase beta chain (Escherichia phage BZ13 (Bacteriophage BZ13)).